Reading from the N-terminus, the 118-residue chain is Large ribosomal subunit protein bL20 (118 aa).

This sequence belongs to the bacterial ribosomal protein bL20 family.

In terms of biological role, binds directly to 23S ribosomal RNA and is necessary for the in vitro assembly process of the 50S ribosomal subunit. It is not involved in the protein synthesizing functions of that subunit. In Phenylobacterium zucineum (strain HLK1), this protein is Large ribosomal subunit protein bL20.